Reading from the N-terminus, the 248-residue chain is uncharacterized protein (248 aa).

An NADP(+)-binding site is contributed by 9–33 (IITGASSGIGKATALLLAEKGAKLV). Serine 141 lines the substrate pocket. Tyrosine 154 functions as the Proton acceptor in the catalytic mechanism.

This sequence belongs to the short-chain dehydrogenases/reductases (SDR) family.

This is an uncharacterized protein from Listeria monocytogenes serovar 1/2a (strain ATCC BAA-679 / EGD-e).